A 267-amino-acid polypeptide reads, in one-letter code: Thymidylate synthase (267 aa).

Arg24 lines the dUMP pocket. His54 serves as a coordination point for (6R)-5,10-methylene-5,6,7,8-tetrahydrofolate. 129 to 130 is a binding site for dUMP; sequence RR. The Nucleophile role is filled by Cys149. Residues 169 to 172, Asn180, and 210 to 212 each bind dUMP; these read RSAD and HIY. A (6R)-5,10-methylene-5,6,7,8-tetrahydrofolate-binding site is contributed by Asp172. Ala266 contacts (6R)-5,10-methylene-5,6,7,8-tetrahydrofolate.

This sequence belongs to the thymidylate synthase family. Bacterial-type ThyA subfamily. In terms of assembly, homodimer.

Its subcellular location is the cytoplasm. It catalyses the reaction dUMP + (6R)-5,10-methylene-5,6,7,8-tetrahydrofolate = 7,8-dihydrofolate + dTMP. It participates in pyrimidine metabolism; dTTP biosynthesis. Catalyzes the reductive methylation of 2'-deoxyuridine-5'-monophosphate (dUMP) to 2'-deoxythymidine-5'-monophosphate (dTMP) while utilizing 5,10-methylenetetrahydrofolate (mTHF) as the methyl donor and reductant in the reaction, yielding dihydrofolate (DHF) as a by-product. This enzymatic reaction provides an intracellular de novo source of dTMP, an essential precursor for DNA biosynthesis. The protein is Thymidylate synthase of Arthrobacter sp. (strain FB24).